A 172-amino-acid chain; its full sequence is Ribosome maturation factor RimM (172 aa).

In terms of domain architecture, PRC barrel spans 96–169 (EGYFYHFQLQ…RMEIKLLPGL (74 aa)).

This sequence belongs to the RimM family. Binds ribosomal protein uS19.

Its subcellular location is the cytoplasm. Functionally, an accessory protein needed during the final step in the assembly of 30S ribosomal subunit, possibly for assembly of the head region. Essential for efficient processing of 16S rRNA. May be needed both before and after RbfA during the maturation of 16S rRNA. It has affinity for free ribosomal 30S subunits but not for 70S ribosomes. This is Ribosome maturation factor RimM from Syntrophomonas wolfei subsp. wolfei (strain DSM 2245B / Goettingen).